A 203-amino-acid chain; its full sequence is Dephospho-CoA kinase (203 aa).

The DPCK domain occupies 5–203 (IVGLTGGIAS…VVYRVAASEH (199 aa)). 13–18 (ASGKSA) contributes to the ATP binding site.

It belongs to the CoaE family.

Its subcellular location is the cytoplasm. It catalyses the reaction 3'-dephospho-CoA + ATP = ADP + CoA + H(+). It functions in the pathway cofactor biosynthesis; coenzyme A biosynthesis; CoA from (R)-pantothenate: step 5/5. Catalyzes the phosphorylation of the 3'-hydroxyl group of dephosphocoenzyme A to form coenzyme A. The chain is Dephospho-CoA kinase from Xanthomonas euvesicatoria pv. vesicatoria (strain 85-10) (Xanthomonas campestris pv. vesicatoria).